Here is a 74-residue protein sequence, read N- to C-terminus: U4-theraphotoxin-Cg1a (74 aa).

The signal sequence occupies residues 1-19; that stretch reads MNATIFALLLLLNLAMYNA. Residues 20–39 constitute a propeptide that is removed on maturation; sequence AEQSSETDMDDTLLIPEINR. Disulfide bonds link Cys-42–Cys-56, Cys-49–Cys-61, and Cys-55–Cys-71.

Belongs to the neurotoxin 36 family. 01 subfamily. In terms of tissue distribution, expressed by the venom gland.

The protein localises to the secreted. Its function is as follows. Probable ion channel inhibitor. The protein is U4-theraphotoxin-Cg1a of Chilobrachys guangxiensis (Chinese earth tiger tarantula).